A 314-amino-acid polypeptide reads, in one-letter code: Nodulation protein D 1 (314 aa).

The HTH lysR-type domain occupies 6 to 63; it reads LDLNLLVVLDALLTERTLTAAASSINLSQPAMSAAVARLRDYFNDELFTTSGRERVLT. The H-T-H motif DNA-binding region spans 23-42; sequence LTAAASSINLSQPAMSAAVA.

Belongs to the LysR transcriptional regulatory family.

In terms of biological role, nodD regulates the expression of the nodABCFE genes which encode other nodulation proteins. NodD is also a negative regulator of its own expression. Binds flavenoids as inducers. The protein is Nodulation protein D 1 (nodD1) of Mesorhizobium japonicum (strain LMG 29417 / CECT 9101 / MAFF 303099) (Mesorhizobium loti (strain MAFF 303099)).